The chain runs to 467 residues: Chromosomal replication initiator protein DnaA (467 aa).

A domain I, interacts with DnaA modulators region spans residues methionine 1–glycine 79. The tract at residues glycine 79–threonine 129 is domain II. The disordered stretch occupies residues arginine 84 to histidine 126. The segment covering lysine 102–alanine 121 has biased composition (low complexity). The domain III, AAA+ region stretch occupies residues arginine 130–alanine 347. The ATP site is built by glycine 175, glycine 177, lysine 178, and threonine 179. The domain IV, binds dsDNA stretch occupies residues arginine 348–asparagine 467.

It belongs to the DnaA family. In terms of assembly, oligomerizes as a right-handed, spiral filament on DNA at oriC.

It is found in the cytoplasm. Its function is as follows. Plays an essential role in the initiation and regulation of chromosomal replication. ATP-DnaA binds to the origin of replication (oriC) to initiate formation of the DNA replication initiation complex once per cell cycle. Binds the DnaA box (a 9 base pair repeat at the origin) and separates the double-stranded (ds)DNA. Forms a right-handed helical filament on oriC DNA; dsDNA binds to the exterior of the filament while single-stranded (ss)DNA is stabiized in the filament's interior. The ATP-DnaA-oriC complex binds and stabilizes one strand of the AT-rich DNA unwinding element (DUE), permitting loading of DNA polymerase. After initiation quickly degrades to an ADP-DnaA complex that is not apt for DNA replication. Binds acidic phospholipids. In Chromobacterium violaceum (strain ATCC 12472 / DSM 30191 / JCM 1249 / CCUG 213 / NBRC 12614 / NCIMB 9131 / NCTC 9757 / MK), this protein is Chromosomal replication initiator protein DnaA.